Consider the following 295-residue polypeptide: ATP synthase gamma chain (295 aa).

This sequence belongs to the ATPase gamma chain family. In terms of assembly, F-type ATPases have 2 components, CF(1) - the catalytic core - and CF(0) - the membrane proton channel. CF(1) has five subunits: alpha(3), beta(3), gamma(1), delta(1), epsilon(1). CF(0) has three main subunits: a, b and c.

Its subcellular location is the cell membrane. Its function is as follows. Produces ATP from ADP in the presence of a proton gradient across the membrane. The gamma chain is believed to be important in regulating ATPase activity and the flow of protons through the CF(0) complex. The protein is ATP synthase gamma chain of Desulforudis audaxviator (strain MP104C).